The following is a 596-amino-acid chain: Elongation factor 4 (596 aa).

Residues 2-184 (KHIRNFSIIA…EIVAKIPPPV (183 aa)) enclose the tr-type G domain. GTP contacts are provided by residues 14-19 (DHGKST) and 131-134 (NKID).

Belongs to the TRAFAC class translation factor GTPase superfamily. Classic translation factor GTPase family. LepA subfamily.

The protein localises to the cell inner membrane. It carries out the reaction GTP + H2O = GDP + phosphate + H(+). Required for accurate and efficient protein synthesis under certain stress conditions. May act as a fidelity factor of the translation reaction, by catalyzing a one-codon backward translocation of tRNAs on improperly translocated ribosomes. Back-translocation proceeds from a post-translocation (POST) complex to a pre-translocation (PRE) complex, thus giving elongation factor G a second chance to translocate the tRNAs correctly. Binds to ribosomes in a GTP-dependent manner. In Shewanella denitrificans (strain OS217 / ATCC BAA-1090 / DSM 15013), this protein is Elongation factor 4.